A 280-amino-acid chain; its full sequence is Type 1 encapsulin shell protein (280 aa).

Belongs to the encapsulin family. Family 1 subfamily. In terms of assembly, this encapsulin nanocompartment is formed by 60 subunits; monomers form pentamers which assemble to form shells. There are 12 pores where the pentamers meet as well as 3-fold axis channels and dimer channels; none are larger than 3-4 Angstroms in diameter. The N-terminus of the protein is inside the shell, the C-terminus is outside.

It is found in the encapsulin nanocompartment. In terms of biological role, shell component of a type 1 encapsulin nanocompartment. Assembles into proteinaceous icosahedral shells 24 nm in diameter in the presence and absence of its ferritin cargo protein. The center of cargo-loaded nanocompartments is loaded with iron. The empty encapsulin nanocompartment sequesters about 2200 Fe ions while the cargo-loaded nanocompartment can maximally sequester about 4150 Fe ions. Does not have any detectable ferroxidase activity. The sequence is that of Type 1 encapsulin shell protein from Rhodospirillum rubrum (strain ATCC 11170 / ATH 1.1.1 / DSM 467 / LMG 4362 / NCIMB 8255 / S1).